Consider the following 267-residue polypeptide: MGKALSHVAKHTCHDECQDSLTSSPGYSAMQTDDSKSGGDVSQFPYVEFTGRDSVTCPTCQGTGRIPRGQENQLVALIPYSDQRLRPRRTKLYVMASVILCLLLCTLAVFFLFPRSIDVNYVGVKSVYVSYDQSKRIVYLNVTNSLNITNNNYYSVDVANITARVQFSQTVIGKTRISNITTIGPLDMKQIDYMVPTTIADEMSYMYDYCTLQSIKVHNIVVMMQITVTTVYFGHAEQVSQEMYQYVDCGGNTTALHEYSLNTPLTG.

At 1–92 (MGKALSHVAK…QRLRPRRTKL (92 aa)) the chain is on the cytoplasmic side. A helical transmembrane segment spans residues 93-113 (YVMASVILCLLLCTLAVFFLF). Residues 114-267 (PRSIDVNYVG…EYSLNTPLTG (154 aa)) lie on the Lumenal side of the membrane. Residues Asn-141, Asn-147, Asn-160, and Asn-179 are each glycosylated (N-linked (GlcNAc...) asparagine). Cys-210 and Cys-249 form a disulfide bridge. N-linked (GlcNAc...) asparagine glycosylation is present at Asn-252.

The protein belongs to the TMEM106 family.

The protein resides in the late endosome membrane. It is found in the lysosome membrane. It localises to the cell membrane. Functionally, in neurons, involved in the transport of late endosomes/lysosomes. May be involved in dendrite morphogenesis and maintenance by regulating lysosomal trafficking. May act as a molecular brake for retrograde transport of late endosomes/lysosomes, possibly via its interaction with MAP6. In motoneurons, may mediate the axonal transport of lysosomes and axonal sorting at the initial segment. It remains unclear whether TMEM106B affects the transport of moving lysosomes in the anterograde or retrograde direction in neurites and whether it is particularly important in the sorting of lysosomes in axons or in dendrites. In neurons, may also play a role in the regulation of lysosomal size and responsiveness to stress. Required for proper lysosomal acidification. The protein is Transmembrane protein 106B (tmem106b) of Danio rerio (Zebrafish).